A 154-amino-acid chain; its full sequence is Metallothiol transferase FosB (154 aa).

One can recognise a VOC domain in the interval 8–123 (GINHLLFSVS…DGHKFELHTG (116 aa)). The Mg(2+) site is built by histidine 11, histidine 70, and glutamate 119. The Proton donor/acceptor role is filled by glutamate 119.

This sequence belongs to the fosfomycin resistance protein family. FosB subfamily. In terms of assembly, homodimer. Mg(2+) serves as cofactor.

It localises to the cytoplasm. Metallothiol transferase which confers resistance to fosfomycin by catalyzing the addition of a thiol cofactor to fosfomycin. L-cysteine is probably the physiological thiol donor. The protein is Metallothiol transferase FosB of Bacillus licheniformis (strain ATCC 14580 / DSM 13 / JCM 2505 / CCUG 7422 / NBRC 12200 / NCIMB 9375 / NCTC 10341 / NRRL NRS-1264 / Gibson 46).